The following is a 138-amino-acid chain: MKPAARRRARECAVQALYSWQLSKNDIADVELQFLSEQDVKDVDIAYFRELLSGVAVNAASLDALMAPFLSRQLEELGQVERAVLRIALFELSKRDDVPYKVAINEAIELAKTFGAEDSHKFVNGVLDKVAPTVRKRK.

The protein belongs to the NusB family.

Involved in transcription antitermination. Required for transcription of ribosomal RNA (rRNA) genes. Binds specifically to the boxA antiterminator sequence of the ribosomal RNA (rrn) operons. The polypeptide is Transcription antitermination protein NusB (Yersinia pseudotuberculosis serotype O:1b (strain IP 31758)).